We begin with the raw amino-acid sequence, 1093 residues long: Carbamoyl phosphate synthase large chain (1093 aa).

The interval 1–412 (MPRRNDIRKI…SLMKALRSLE (412 aa)) is carboxyphosphate synthetic domain. Positions 139, 179, 185, 186, 218, 220, 225, 251, 252, 253, 295, and 309 each coordinate ATP. Residues 143 to 338 (KDAMTRIGLD…IAKIAAKLAV (196 aa)) form the ATP-grasp 1 domain. Mg(2+) is bound by residues glutamine 295, glutamate 309, and asparagine 311. Positions 295, 309, and 311 each coordinate Mn(2+). The tract at residues 413–560 (TGKRVGAEVL…YSSYEEEDEA (148 aa)) is oligomerization domain. The segment at 561 to 952 (PQTDKRKVII…AFAKAQLSAG (392 aa)) is carbamoyl phosphate synthetic domain. The ATP-grasp 2 domain occupies 689–880 (GKLLEQLQIP…LAKIASRLMT (192 aa)). ATP contacts are provided by arginine 725, histidine 764, leucine 766, glutamate 771, glycine 796, isoleucine 797, histidine 798, serine 799, glutamine 839, and glutamate 851. 3 residues coordinate Mg(2+): glutamine 839, glutamate 851, and asparagine 853. Positions 839, 851, and 853 each coordinate Mn(2+). In terms of domain architecture, MGS-like spans 953–1093 (LILPSSGTVF…QLLHAGHAVK (141 aa)). An allosteric domain region spans residues 953-1093 (LILPSSGTVF…QLLHAGHAVK (141 aa)).

This sequence belongs to the CarB family. Composed of two chains; the small (or glutamine) chain promotes the hydrolysis of glutamine to ammonia, which is used by the large (or ammonia) chain to synthesize carbamoyl phosphate. Tetramer of heterodimers (alpha,beta)4. The cofactor is Mg(2+). Requires Mn(2+) as cofactor.

The enzyme catalyses hydrogencarbonate + L-glutamine + 2 ATP + H2O = carbamoyl phosphate + L-glutamate + 2 ADP + phosphate + 2 H(+). It catalyses the reaction hydrogencarbonate + NH4(+) + 2 ATP = carbamoyl phosphate + 2 ADP + phosphate + 2 H(+). Its pathway is amino-acid biosynthesis; L-arginine biosynthesis; carbamoyl phosphate from bicarbonate: step 1/1. It functions in the pathway pyrimidine metabolism; UMP biosynthesis via de novo pathway; (S)-dihydroorotate from bicarbonate: step 1/3. Its function is as follows. Large subunit of the glutamine-dependent carbamoyl phosphate synthetase (CPSase). CPSase catalyzes the formation of carbamoyl phosphate from the ammonia moiety of glutamine, carbonate, and phosphate donated by ATP, constituting the first step of 2 biosynthetic pathways, one leading to arginine and/or urea and the other to pyrimidine nucleotides. The large subunit (synthetase) binds the substrates ammonia (free or transferred from glutamine from the small subunit), hydrogencarbonate and ATP and carries out an ATP-coupled ligase reaction, activating hydrogencarbonate by forming carboxy phosphate which reacts with ammonia to form carbamoyl phosphate. The polypeptide is Carbamoyl phosphate synthase large chain (Acidobacterium capsulatum (strain ATCC 51196 / DSM 11244 / BCRC 80197 / JCM 7670 / NBRC 15755 / NCIMB 13165 / 161)).